A 673-amino-acid polypeptide reads, in one-letter code: B3 domain-containing protein Os01g0905400 (673 aa).

Residues 1 to 34 are compositionally biased toward basic and acidic residues; that stretch reads MVELIKVPKIEQEEGNADSHGKEKADVVHEEKTE. A disordered region spans residues 1-44; the sequence is MVELIKVPKIEQEEGNADSHGKEKADVVHEEKTEKVKRRRKRVS. The segment at residues 79–172 is a DNA-binding region (TF-B3 1); that stretch reads LPSFFKIMVG…VFTVQIFAIS (94 aa). Residues 315–337 form a disordered region; that stretch reads PSFSYPESSNVMTADKESERSHQ. Positions 328-337 are enriched in basic and acidic residues; sequence ADKESERSHQ. Positions 576-671 form a DNA-binding region, TF-B3 2; sequence SKKFCITIPP…ELSFQVLVPN (96 aa).

It localises to the nucleus. The polypeptide is B3 domain-containing protein Os01g0905400 (Oryza sativa subsp. japonica (Rice)).